Consider the following 195-residue polypeptide: ATP-dependent Clp protease proteolytic subunit (195 aa).

S99 serves as the catalytic Nucleophile. H124 is a catalytic residue.

The protein belongs to the peptidase S14 family. In terms of assembly, fourteen ClpP subunits assemble into 2 heptameric rings which stack back to back to give a disk-like structure with a central cavity, resembling the structure of eukaryotic proteasomes.

It localises to the cytoplasm. It carries out the reaction Hydrolysis of proteins to small peptides in the presence of ATP and magnesium. alpha-casein is the usual test substrate. In the absence of ATP, only oligopeptides shorter than five residues are hydrolyzed (such as succinyl-Leu-Tyr-|-NHMec, and Leu-Tyr-Leu-|-Tyr-Trp, in which cleavage of the -Tyr-|-Leu- and -Tyr-|-Trp bonds also occurs).. Functionally, cleaves peptides in various proteins in a process that requires ATP hydrolysis. Has a chymotrypsin-like activity. Plays a major role in the degradation of misfolded proteins. In Desulforamulus reducens (strain ATCC BAA-1160 / DSM 100696 / MI-1) (Desulfotomaculum reducens), this protein is ATP-dependent Clp protease proteolytic subunit.